The sequence spans 566 residues: Mitochondrial distribution and morphology protein 34 (566 aa).

The region spanning 1 to 195 (MAFNFNWSPL…LPAIIHRLSL (195 aa)) is the SMP-LTD domain. Disordered stretches follow at residues 212 to 237 (PEQT…DSLG), 349 to 401 (GYGL…NPSV), 432 to 518 (PERR…SSST), and 539 to 566 (KLMP…AYGQ). The span at 358–370 (RHSKAHSRKRKKR) shows a compositional bias: basic residues. Over residues 380-401 (TSDTASVSDESAYTETASNPSV) the composition is skewed to polar residues. The span at 444–454 (PRRDIATEMLR) shows a compositional bias: basic and acidic residues.

The protein belongs to the MDM34 family. As to quaternary structure, component of the ER-mitochondria encounter structure (ERMES) or MDM complex, composed of mmm1, mdm10, mdm12 and mdm34.

Its subcellular location is the mitochondrion outer membrane. Its function is as follows. Component of the ERMES/MDM complex, which serves as a molecular tether to connect the endoplasmic reticulum (ER) and mitochondria. Components of this complex are involved in the control of mitochondrial shape and protein biogenesis, and function in nonvesicular lipid trafficking between the ER and mitochondria. Mdm34 is required for the interaction of the ER-resident membrane protein mmm1 and the outer mitochondrial membrane-resident beta-barrel protein mdm10. The protein is Mitochondrial distribution and morphology protein 34 of Aspergillus flavus (strain ATCC 200026 / FGSC A1120 / IAM 13836 / NRRL 3357 / JCM 12722 / SRRC 167).